We begin with the raw amino-acid sequence, 291 residues long: POU class 2 homeobox associating-factor 2 (291 aa).

In terms of domain architecture, OCA spans 7–29 (KRVYQGVRVKHTVKDLLAEKRLR). Residues 176 to 219 (AAPVADSPSLAGPDSGSSSPYRLTSGRSGSSIPSSSQPYTLQPL) are disordered. Residues 200–211 (SGRSGSSIPSSS) show a composition bias toward low complexity.

The protein belongs to the POU2AF family.

Functionally, transcriptional coactivator that may regulate cell type-specific differentiation pathways. This Danio rerio (Zebrafish) protein is POU class 2 homeobox associating-factor 2 (pou2af2).